Reading from the N-terminus, the 70-residue chain is Large ribosomal subunit protein eL38 (70 aa).

Belongs to the eukaryotic ribosomal protein eL38 family.

This Spodoptera frugiperda (Fall armyworm) protein is Large ribosomal subunit protein eL38 (RpL38).